Reading from the N-terminus, the 254-residue chain is Phosphoribosylaminoimidazole-succinocarboxamide synthase (254 aa).

This sequence belongs to the SAICAR synthetase family.

The catalysed reaction is 5-amino-1-(5-phospho-D-ribosyl)imidazole-4-carboxylate + L-aspartate + ATP = (2S)-2-[5-amino-1-(5-phospho-beta-D-ribosyl)imidazole-4-carboxamido]succinate + ADP + phosphate + 2 H(+). It participates in purine metabolism; IMP biosynthesis via de novo pathway; 5-amino-1-(5-phospho-D-ribosyl)imidazole-4-carboxamide from 5-amino-1-(5-phospho-D-ribosyl)imidazole-4-carboxylate: step 1/2. The polypeptide is Phosphoribosylaminoimidazole-succinocarboxamide synthase (Rhodospirillum centenum (strain ATCC 51521 / SW)).